The following is a 282-amino-acid chain: Phosphatidylserine decarboxylase proenzyme (282 aa).

Active-site charge relay system; for autoendoproteolytic cleavage activity residues include D89, H145, and S249. Residue S249 is the Schiff-base intermediate with substrate; via pyruvic acid; for decarboxylase activity of the active site. Position 249 is a pyruvic acid (Ser); by autocatalysis (S249).

Belongs to the phosphatidylserine decarboxylase family. PSD-B subfamily. Prokaryotic type I sub-subfamily. As to quaternary structure, heterodimer of a large membrane-associated beta subunit and a small pyruvoyl-containing alpha subunit. Pyruvate is required as a cofactor. Post-translationally, is synthesized initially as an inactive proenzyme. Formation of the active enzyme involves a self-maturation process in which the active site pyruvoyl group is generated from an internal serine residue via an autocatalytic post-translational modification. Two non-identical subunits are generated from the proenzyme in this reaction, and the pyruvate is formed at the N-terminus of the alpha chain, which is derived from the carboxyl end of the proenzyme. The autoendoproteolytic cleavage occurs by a canonical serine protease mechanism, in which the side chain hydroxyl group of the serine supplies its oxygen atom to form the C-terminus of the beta chain, while the remainder of the serine residue undergoes an oxidative deamination to produce ammonia and the pyruvoyl prosthetic group on the alpha chain. During this reaction, the Ser that is part of the protease active site of the proenzyme becomes the pyruvoyl prosthetic group, which constitutes an essential element of the active site of the mature decarboxylase.

The protein localises to the cell membrane. The enzyme catalyses a 1,2-diacyl-sn-glycero-3-phospho-L-serine + H(+) = a 1,2-diacyl-sn-glycero-3-phosphoethanolamine + CO2. It functions in the pathway phospholipid metabolism; phosphatidylethanolamine biosynthesis; phosphatidylethanolamine from CDP-diacylglycerol: step 2/2. Catalyzes the formation of phosphatidylethanolamine (PtdEtn) from phosphatidylserine (PtdSer). The protein is Phosphatidylserine decarboxylase proenzyme of Anaeromyxobacter sp. (strain K).